A 660-amino-acid polypeptide reads, in one-letter code: Alpha-1,2-mannosyltransferase MNN21 (660 aa).

The Cytoplasmic portion of the chain corresponds to Met1–Lys17. The chain crosses the membrane as a helical span at residues Tyr18–Trp38. Residues Ser39 to Asp660 lie on the Extracellular side of the membrane. The segment at Pro75–Leu125 is disordered. The N-linked (GlcNAc...) asparagine glycan is linked to Asn657.

Belongs to the MNN1/MNT family.

It is found in the golgi apparatus membrane. It participates in protein modification; protein glycosylation. In terms of biological role, alpha-1,2-mannosyltransferase required for cell wall integrity. Responsible for addition of the first alpha-1,2-linked mannose to form the branches on the mannan backbone of oligosaccharides. Addition of alpha-1,2-mannose is required for stabilization of the alpha-1,6-mannose backbone and hence regulates mannan fibril length; and is important for both immune recognition and virulence. The protein is Alpha-1,2-mannosyltransferase MNN21 (MNN21) of Candida albicans (strain SC5314 / ATCC MYA-2876) (Yeast).